The primary structure comprises 403 residues: MGLKAYLEKIEPNFEAGGKYEKWYALYEAAATIFYTPGKVNKAGTHVRDSIDLKRIMIMVWAATFPAMFYGMYNIGQQAHNVILNGGASLPDMWQAALFTALGGQIGLESTGGLAMFLYGACFFLPIYAVTFIVGGFWEVLFASVRKHEVNEGFFVTSVLFALTLPATIPLWQVALGITFGVVIAKEVFGGTGRNFLNPALSGRAFLYFAYPAQISGDAIWTAADGFSGATWLSQAAAGNVTDWSLNADWWDAFFGNIQGSVGEVSSLAILLGGLFIIYMRIASWRIVLGVLLGGAVFSTLLNVIGSDTNAMFAMPWYWHVVTGGFAFGMFFMATDPVSASFTNSAKWAYGFLIGLMCVLIRVLNPAFPEGMMLAILFANLWAPLFDYFVAQSNIKRRMARVG.

3 consecutive transmembrane segments (helical) span residues 56-76, 114-134, and 165-185; these read IMIMVWAATFPAMFYGMYNIG, LAMFLYGACFFLPIYAVTFIV, and LPATIPLWQVALGITFGVVIA. Thr231 carries the FMN phosphoryl threonine modification. The next 5 membrane-spanning stretches (helical) occupy residues 260–280, 287–307, 312–332, 348–368, and 371–391; these read GSVGEVSSLAILLGGLFIIYM, IVLGVLLGGAVFSTLLNVIGS, MFAMPWYWHVVTGGFAFGMFF, WAYGFLIGLMCVLIRVLNPAF, and GMMLAILFANLWAPLFDYFVA.

It belongs to the NqrB/RnfD family. In terms of assembly, composed of six subunits; NqrA, NqrB, NqrC, NqrD, NqrE and NqrF. Requires FMN as cofactor.

It is found in the cell inner membrane. It catalyses the reaction a ubiquinone + n Na(+)(in) + NADH + H(+) = a ubiquinol + n Na(+)(out) + NAD(+). In terms of biological role, NQR complex catalyzes the reduction of ubiquinone-1 to ubiquinol by two successive reactions, coupled with the transport of Na(+) ions from the cytoplasm to the periplasm. NqrA to NqrE are probably involved in the second step, the conversion of ubisemiquinone to ubiquinol. This chain is Na(+)-translocating NADH-quinone reductase subunit B, found in Pseudoalteromonas atlantica (strain T6c / ATCC BAA-1087).